Reading from the N-terminus, the 211-residue chain is tRNA (guanine-N(7)-)-methyltransferase (211 aa).

S-adenosyl-L-methionine-binding residues include glutamate 44, aspartate 69, aspartate 96, and aspartate 118. Aspartate 118 is an active-site residue. Position 122 (lysine 122) interacts with substrate. Residues 124 to 129 (KHEKRR) are interaction with RNA. Substrate-binding positions include aspartate 154 and 191–194 (TEYE).

This sequence belongs to the class I-like SAM-binding methyltransferase superfamily. TrmB family.

It catalyses the reaction guanosine(46) in tRNA + S-adenosyl-L-methionine = N(7)-methylguanosine(46) in tRNA + S-adenosyl-L-homocysteine. Its pathway is tRNA modification; N(7)-methylguanine-tRNA biosynthesis. In terms of biological role, catalyzes the formation of N(7)-methylguanine at position 46 (m7G46) in tRNA. The protein is tRNA (guanine-N(7)-)-methyltransferase of Streptococcus uberis (strain ATCC BAA-854 / 0140J).